Reading from the N-terminus, the 247-residue chain is tRNA uridine(34) hydroxylase (247 aa).

The region spanning 124–218 (TKQDVIVIDT…YLEDTQNKNN (95 aa)) is the Rhodanese domain. Cys-178 serves as the catalytic Cysteine persulfide intermediate.

This sequence belongs to the TrhO family.

It carries out the reaction uridine(34) in tRNA + AH2 + O2 = 5-hydroxyuridine(34) in tRNA + A + H2O. Its function is as follows. Catalyzes oxygen-dependent 5-hydroxyuridine (ho5U) modification at position 34 in tRNAs. The protein is tRNA uridine(34) hydroxylase of Rickettsia africae (strain ESF-5).